The primary structure comprises 152 residues: Deoxyuridine 5'-triphosphate nucleotidohydrolase (152 aa).

Residues 71–73, Asn84, 88–90, and Met98 contribute to the substrate site; these read RSG and LID.

The protein belongs to the dUTPase family. The cofactor is Mg(2+).

It carries out the reaction dUTP + H2O = dUMP + diphosphate + H(+). The protein operates within pyrimidine metabolism; dUMP biosynthesis; dUMP from dCTP (dUTP route): step 2/2. This enzyme is involved in nucleotide metabolism: it produces dUMP, the immediate precursor of thymidine nucleotides and it decreases the intracellular concentration of dUTP so that uracil cannot be incorporated into DNA. The protein is Deoxyuridine 5'-triphosphate nucleotidohydrolase of Citrobacter koseri (strain ATCC BAA-895 / CDC 4225-83 / SGSC4696).